The sequence spans 633 residues: 1-deoxy-D-xylulose-5-phosphate synthase 2 (633 aa).

Thiamine diphosphate contacts are provided by residues His-73 and 113–115; that span reads SHA. Asp-145 provides a ligand contact to Mg(2+). Residues 146–147, Asn-175, Tyr-286, and Glu-367 contribute to the thiamine diphosphate site; that span reads GA. A Mg(2+)-binding site is contributed by Asn-175.

This sequence belongs to the transketolase family. DXPS subfamily. Homodimer. Requires Mg(2+) as cofactor. Thiamine diphosphate is required as a cofactor.

It carries out the reaction D-glyceraldehyde 3-phosphate + pyruvate + H(+) = 1-deoxy-D-xylulose 5-phosphate + CO2. Its pathway is metabolic intermediate biosynthesis; 1-deoxy-D-xylulose 5-phosphate biosynthesis; 1-deoxy-D-xylulose 5-phosphate from D-glyceraldehyde 3-phosphate and pyruvate: step 1/1. In terms of biological role, catalyzes the acyloin condensation reaction between C atoms 2 and 3 of pyruvate and glyceraldehyde 3-phosphate to yield 1-deoxy-D-xylulose-5-phosphate (DXP). This chain is 1-deoxy-D-xylulose-5-phosphate synthase 2, found in Kitasatospora griseola (Streptomyces griseolosporeus).